The following is a 218-amino-acid chain: Small ribosomal subunit protein uS3 (218 aa).

Residues 38-106 (LRSDLKKKLM…PVHLNIEEVK (69 aa)) form the KH type-2 domain.

This sequence belongs to the universal ribosomal protein uS3 family. As to quaternary structure, part of the 30S ribosomal subunit. Forms a tight complex with proteins S10 and S14.

Binds the lower part of the 30S subunit head. Binds mRNA in the 70S ribosome, positioning it for translation. The protein is Small ribosomal subunit protein uS3 of Legionella pneumophila (strain Lens).